We begin with the raw amino-acid sequence, 2319 residues long: Coagulation factor VIII (2319 aa).

Residues 1-19 form the signal peptide; it reads MQIALFACFFLSLFNFCSS. 2 consecutive Plastocyanin-like domains span residues 20–199 and 207–349; these read AIRR…LLVC and ERTQ…VDSC. An F5/8 type A 1 domain is found at 20-349; sequence AIRRYYLGAV…MEAYVKVDSC (330 aa). N-linked (GlcNAc...) asparagine glycosylation is present at asparagine 61. Cysteine 173 and cysteine 199 are joined by a disulfide. N-linked (GlcNAc...) asparagine glycosylation is found at asparagine 233 and asparagine 259. Tyrosine 367 bears the Sulfotyrosine mark. Plastocyanin-like domains follow at residues 399 to 573 and 583 to 730; these read KTWI…LLIC and NQMM…VSSC. Residues 399-730 enclose the F5/8 type A 2 domain; the sequence is KTWIHYISAE…MTALLKVSSC (332 aa). Residue asparagine 423 is glycosylated (N-linked (GlcNAc...) asparagine). A disulfide bond links cysteine 547 and cysteine 573. The N-linked (GlcNAc...) asparagine glycan is linked to asparagine 601. 3 positions are modified to sulfotyrosine: tyrosine 737, tyrosine 738, and tyrosine 742. The interval 760–1640 is b; sequence SFFQNTNHPN…IPPVLKRHQR (881 aa). N-linked (GlcNAc...) asparagine glycans are attached at residues asparagine 880, asparagine 958, asparagine 1015, asparagine 1022, asparagine 1026, asparagine 1044, asparagine 1076, asparagine 1087, asparagine 1136, asparagine 1161, asparagine 1192, asparagine 1255, asparagine 1268, asparagine 1273, asparagine 1274, asparagine 1302, asparagine 1316, asparagine 1340, and asparagine 1378. The segment at 1530-1549 is disordered; it reads WNKAKRHGESIKGKTESSKN. Residues 1536-1548 are compositionally biased toward basic and acidic residues; that stretch reads HGESIKGKTESSK. Sulfotyrosine is present on residues tyrosine 1669 and tyrosine 1687. 2 consecutive Plastocyanin-like domains span residues 1683-1845 and 1855-2008; these read KTRH…LLIC and GRQV…SKQC. One can recognise an F5/8 type A 3 domain in the interval 1683–2008; that stretch reads KTRHYFIAAV…TLFLVYSKQC (326 aa). An N-linked (GlcNAc...) asparagine glycan is attached at asparagine 1797. 3 disulfide bridges follow: cysteine 1819–cysteine 1845, cysteine 2008–cysteine 2156, and cysteine 2161–cysteine 2313. 2 consecutive F5/8 type C domains span residues 2008–2156 and 2161–2313; these read CQIP…LMGC and CSIP…ILGC. N-linked (GlcNAc...) asparagine glycosylation is present at asparagine 2105.

It belongs to the multicopper oxidase family. Interacts with vWF. vWF binding is essential for the stabilization of F8 in circulation. The binding of vWF and activation depend on the sulfation of Tyr-1669. In terms of processing, proteolytically cleaved by cathepsin CTSG to produce a partially activated form. Found in most tissues.

The protein resides in the secreted. Its subcellular location is the extracellular space. Its function is as follows. Factor VIII, along with calcium and phospholipid, acts as a cofactor for factor IXa when it converts factor X to the activated form, factor Xa. In Mus musculus (Mouse), this protein is Coagulation factor VIII (F8).